Consider the following 458-residue polypeptide: Serine protease Do-like HtrB (458 aa).

The span at 1-18 (MDYRRDGQNDQHQTEPSH) shows a compositional bias: basic and acidic residues. Residues 1 to 42 (MDYRRDGQNDQHQTEPSHTEQQNTENQKLIGHSEQELLDAPV) are disordered. Over 1–71 (MDYRRDGQND…TAVKKEKKRR (71 aa)) the chain is Cytoplasmic. The chain crosses the membrane as a helical span at residues 72-92 (AAWLSPILGGIIGGGLMLGIA). Topologically, residues 93–458 (PYLPSDQNQA…LTKQTESSSS (366 aa)) are extracellular. Residues 146–170 (QTSQNNTFGTGGGSSSESESGTGSG) form a disordered region. Active-site charge relay system residues include His187, Asp217, and Ser298. Substrate contacts are provided by residues 296–298 (GNS) and 352–356 (LGVQM). In terms of domain architecture, PDZ spans 356-440 (MIDMSQVPET…KTTIQVLRKG (85 aa)).

Belongs to the peptidase S1C family.

The protein resides in the cell membrane. The catalysed reaction is Acts on substrates that are at least partially unfolded. The cleavage site P1 residue is normally between a pair of hydrophobic residues, such as Val-|-Val.. Degrades abnormal exported proteins and responsible for the propeptide processing of a natural pro-protein and for the maturation of a native protein. It also plays a prominent role in stress (heat shock, ethanol, puromycin and NaCl) resistance during active exponential growth. This Bacillus subtilis (strain 168) protein is Serine protease Do-like HtrB (htrB).